The chain runs to 1388 residues: Rho-associated protein kinase 2 (1388 aa).

The segment at 1-24 is disordered; sequence MSRPPPTGKMPGAPEAVSGDGAGA. A Protein kinase domain is found at 92-354; the sequence is YDVVKVIGRG…VEEIKQHPFF (263 aa). ATP-binding positions include 98-106 and Lys-121; that span reads IGRGAFGEV. The Proton acceptor role is filled by Asp-214. In terms of domain architecture, AGC-kinase C-terminal spans 357 to 425; sequence DQWNWDNIRE…YRENLLLSDS (69 aa). The tract at residues 363 to 784 is interaction with PPP1R12A; that stretch reads NIRETAAPVV…INELLKQKDV (422 aa). The interaction with NPM1 stretch occupies residues 373–420; the sequence is PELSSDIDSSNFDDIEDDKGDVETFPIPKAFVGNQLPFIGFTYYRENL. Thr-414 is subject to Phosphothreonine; by ROCK2. The REM-1 domain occupies 497-573; sequence ALRQLEREKA…LDETNALLRT (77 aa). Positions 512–530 are enriched in basic and acidic residues; it reads NAEYQRKADHEADKKRNLE. Residues 512–532 form a disordered region; that stretch reads NAEYQRKADHEADKKRNLEND. At Tyr-722 the chain carries Phosphotyrosine; by SRC. One can recognise a RhoBD domain in the interval 979–1047; the sequence is TSDVANLANE…LAEIMNRKEP (69 aa). The tract at residues 979-1047 is RHOA binding; that stretch reads TSDVANLANE…LAEIMNRKEP (69 aa). A coiled-coil region spans residues 1054-1126; the sequence is TDMRRKEKEN…EQLRSQLQAL (73 aa). Residue Ser-1137 is modified to Phosphoserine. Positions 1150–1349 constitute a PH domain; sequence ESRLEGWLSL…WVSRLVKKIP (200 aa). At Thr-1212 the chain carries Phosphothreonine. A Phorbol-ester/DAG-type zinc finger spans residues 1260 to 1315; the sequence is GHEFIPTLYHFPTNCEACMKPLWHMFKPPPALECRRCHIKCHKDHMDKKEEIIAPC. A disordered region spans residues 1345–1388; it reads VKKIPKKPPAPDPFARSSPRTSMKIQQNQSIRRPSRQLAANKPS. A phosphoserine mark is found at Ser-1362 and Ser-1374. Positions 1362 to 1376 are enriched in polar residues; the sequence is SPRTSMKIQQNQSIR.

It belongs to the protein kinase superfamily. AGC Ser/Thr protein kinase family. As to quaternary structure, homodimer. Interacts with IRS1. Interacts with RAF1. Interacts with RHOA (activated by GTP), RHOB and RHOC. Interacts with PPP1R12A. Interacts with EP300. Interacts with CHORDC1. Interacts with BRCA2. Interacts with NPM1; this interaction enhances ROCK2 activity. Interacts with SORL1. Interacts with PJVK. Mg(2+) serves as cofactor. Autophosphorylated. Phosphorylation at Tyr-722 reduces its binding to RHOA and is crucial for focal adhesion dynamics. Dephosphorylation by PTPN11 stimulates its RHOA binding activity. In terms of processing, cleaved by granzyme B during apoptosis. This leads to constitutive activation of the kinase and membrane blebbing.

Its subcellular location is the cytoplasm. It is found in the cell membrane. The protein localises to the nucleus. It localises to the cytoskeleton. The protein resides in the microtubule organizing center. Its subcellular location is the centrosome. It carries out the reaction L-seryl-[protein] + ATP = O-phospho-L-seryl-[protein] + ADP + H(+). It catalyses the reaction L-threonyl-[protein] + ATP = O-phospho-L-threonyl-[protein] + ADP + H(+). Its activity is regulated as follows. Activated by RHOA binding. Inhibited by Y-27632. In terms of biological role, protein kinase which is a key regulator of actin cytoskeleton and cell polarity. Involved in regulation of smooth muscle contraction, actin cytoskeleton organization, stress fiber and focal adhesion formation, neurite retraction, cell adhesion and motility via phosphorylation of ADD1, BRCA2, CNN1, EZR, DPYSL2, EP300, MSN, MYL9/MLC2, NPM1, RDX, PPP1R12A and VIM. Phosphorylates SORL1 and IRF4. Acts as a negative regulator of VEGF-induced angiogenic endothelial cell activation. Positively regulates the activation of p42/MAPK1-p44/MAPK3 and of p90RSK/RPS6KA1 during myogenic differentiation. Plays an important role in the timely initiation of centrosome duplication. Inhibits keratinocyte terminal differentiation. May regulate closure of the eyelids and ventral body wall through organization of actomyosin bundles. Plays a critical role in the regulation of spine and synaptic properties in the hippocampus. Plays an important role in generating the circadian rhythm of the aortic myofilament Ca(2+) sensitivity and vascular contractility by modulating the myosin light chain phosphorylation. The chain is Rho-associated protein kinase 2 (ROCK2) from Sus scrofa (Pig).